Reading from the N-terminus, the 256-residue chain is Protein YIPF5 (256 aa).

At 1–125 (MSNFDNFNTD…ADGNIMNETD (125 aa)) the chain is on the cytoplasmic side. Residues 126-146 (LAGPMVFCLAFGATLLLAGKI) form a helical membrane-spanning segment. Residue glutamine 147 is a topological domain, lumenal. Residues 148–168 (FGYVYGISAIGCLGMYCLLNL) traverse the membrane as a helical segment. Over 169–172 (MSMT) the chain is Cytoplasmic. Residues 173 to 193 (GVSFGCVSSVLGYCLLPMIIL) traverse the membrane as a helical segment. The Lumenal segment spans residues 194 to 195 (SS). Residues 196-216 (FAVIFSLQGILGIVLAALIIG) traverse the membrane as a helical segment. Over 217 to 235 (WCSFSASKIFISALAMDGQ) the chain is Cytoplasmic. A helical transmembrane segment spans residues 236-256 (QVLVAYPCALLYGVFALISVF).

It belongs to the YIP1 family.

It localises to the endoplasmic reticulum membrane. The protein resides in the golgi apparatus. The protein localises to the cis-Golgi network membrane. In terms of biological role, plays a role in transport between endoplasmic reticulum and Golgi. The polypeptide is Protein YIPF5 (yipf5) (Xenopus tropicalis (Western clawed frog)).